The following is a 79-amino-acid chain: Large ribosomal subunit protein uL24 (79 aa).

The tract at residues 1 to 29 (MPKLKKLLLKVSTSKPNTNPPSQNEEKGT) is disordered. Residues 11-23 (VSTSKPNTNPPSQ) show a composition bias toward polar residues.

Belongs to the universal ribosomal protein uL24 family. In terms of assembly, part of the 50S ribosomal subunit.

Its function is as follows. One of two assembly initiator proteins, it binds directly to the 5'-end of the 23S rRNA, where it nucleates assembly of the 50S subunit. One of the proteins that surrounds the polypeptide exit tunnel on the outside of the subunit. The protein is Large ribosomal subunit protein uL24 (rplX) of Onion yellows phytoplasma (strain OY-M).